We begin with the raw amino-acid sequence, 582 residues long: uncharacterized protein (582 aa).

Basic and acidic residues predominate over residues 1–23 (MAHEGSRQVRDRGVTRSKAEKVR). 3 disordered regions span residues 1–29 (MAHEGSRQVRDRGVTRSKAEKVRPPTVPV), 110–133 (AVAEDPTWGEDEEPSACTTDSWAQ), and 147–221 (LENF…SSAG). S242 carries the phosphoserine modification. Disordered regions lie at residues 310–331 (RPSASCQQQRAGHSDVRLSAHH) and 551–582 (LSSGVPEQEDKEGSTFPPVEQHPIQTGAPKPR). Over residues 311–320 (PSASCQQQRA) the composition is skewed to polar residues.

This is an uncharacterized protein from Homo sapiens (Human).